Reading from the N-terminus, the 144-residue chain is Grifin (144 aa).

A Galectin domain is found at 5–133; that stretch reads SKAFCAGGLA…DHCLAQVELA (129 aa). Ser-138 carries the post-translational modification Phosphoserine.

Homodimer. As to expression, not detected in lens.

The polypeptide is Grifin (GRIFIN) (Homo sapiens (Human)).